A 168-amino-acid polypeptide reads, in one-letter code: MRKPVGAIEIVLAPGEVVFETRPARLRTLLGSCVAITFWHPQQHIGGMCHFMLPHRPHKHKALDGRYGDEALEMLIRHALANHTKPRDYQVKLFGGGQMFPEQQNDSQQLNVADLNVHAALAMAERHRLQLKAQDMGRTGHRTIIFDLWDGNVWVKHQPIEVTEKDAR.

The protein belongs to the CheD family.

It catalyses the reaction L-glutaminyl-[protein] + H2O = L-glutamyl-[protein] + NH4(+). Probably deamidates glutamine residues to glutamate on methyl-accepting chemotaxis receptors (MCPs), playing an important role in chemotaxis. In Pseudomonas syringae pv. tomato (strain ATCC BAA-871 / DC3000), this protein is Probable chemoreceptor glutamine deamidase CheD.